A 215-amino-acid chain; its full sequence is MKAYTVEQGIVAPLDRANVDTDLIIPKQFLKSIKRTGFGDNLFDELRYLDEGYPGQDNSVRPKNPDFVLNQPRYQGATVLIARTNFGCGSSREHAPWALNEYGFRTVIAPSFADIFFNNCFKNGMLPVILPEDIVDQLFKECAAQEGYQLTIDLAAQEVRTPTGEAFKFEVDPFRKHCLLNGLDDIGLTLQNADAIRAYEEKTKQVRPWVFQEIN.

The protein belongs to the LeuD family. LeuD type 1 subfamily. As to quaternary structure, heterodimer of LeuC and LeuD.

The enzyme catalyses (2R,3S)-3-isopropylmalate = (2S)-2-isopropylmalate. It participates in amino-acid biosynthesis; L-leucine biosynthesis; L-leucine from 3-methyl-2-oxobutanoate: step 2/4. In terms of biological role, catalyzes the isomerization between 2-isopropylmalate and 3-isopropylmalate, via the formation of 2-isopropylmaleate. The protein is 3-isopropylmalate dehydratase small subunit of Acinetobacter baumannii (strain AB307-0294).